A 265-amino-acid polypeptide reads, in one-letter code: Phosphatidylserine decarboxylase proenzyme (265 aa).

Catalysis depends on Ser-183, which acts as the Schiff-base intermediate with substrate; via pyruvic acid. Ser-183 carries the post-translational modification Pyruvic acid (Ser); by autocatalysis. Residues 218 to 242 (PQIESEPESEPALQTAPVETAANPS) are disordered.

It belongs to the phosphatidylserine decarboxylase family. PSD-A subfamily. In terms of assembly, heterodimer of a large membrane-associated beta subunit and a small pyruvoyl-containing alpha subunit. It depends on pyruvate as a cofactor. Post-translationally, is synthesized initially as an inactive proenzyme. Formation of the active enzyme involves a self-maturation process in which the active site pyruvoyl group is generated from an internal serine residue via an autocatalytic post-translational modification. Two non-identical subunits are generated from the proenzyme in this reaction, and the pyruvate is formed at the N-terminus of the alpha chain, which is derived from the carboxyl end of the proenzyme. The post-translation cleavage follows an unusual pathway, termed non-hydrolytic serinolysis, in which the side chain hydroxyl group of the serine supplies its oxygen atom to form the C-terminus of the beta chain, while the remainder of the serine residue undergoes an oxidative deamination to produce ammonia and the pyruvoyl prosthetic group on the alpha chain.

The protein resides in the cell membrane. The enzyme catalyses a 1,2-diacyl-sn-glycero-3-phospho-L-serine + H(+) = a 1,2-diacyl-sn-glycero-3-phosphoethanolamine + CO2. Its pathway is phospholipid metabolism; phosphatidylethanolamine biosynthesis; phosphatidylethanolamine from CDP-diacylglycerol: step 2/2. Its function is as follows. Catalyzes the formation of phosphatidylethanolamine (PtdEtn) from phosphatidylserine (PtdSer). The chain is Phosphatidylserine decarboxylase proenzyme from Neisseria meningitidis serogroup C (strain 053442).